The following is a 274-amino-acid chain: Large ribosomal subunit protein uL2cz/uL2cy (274 aa).

Positions Pro-225–Lys-274 are disordered.

Belongs to the universal ribosomal protein uL2 family. Part of the 50S ribosomal subunit.

The protein resides in the plastid. It is found in the chloroplast. This is Large ribosomal subunit protein uL2cz/uL2cy (rpl2-A) from Lotus japonicus (Lotus corniculatus var. japonicus).